Consider the following 139-residue polypeptide: Putative nickel-responsive regulator (139 aa).

4 residues coordinate Ni(2+): histidine 79, histidine 90, histidine 92, and cysteine 98.

Belongs to the transcriptional regulatory CopG/NikR family. Ni(2+) serves as cofactor.

Transcriptional regulator. This Pelobacter propionicus (strain DSM 2379 / NBRC 103807 / OttBd1) protein is Putative nickel-responsive regulator.